Here is a 130-residue protein sequence, read N- to C-terminus: D-ribose pyranase (130 aa).

H20 serves as the catalytic Proton donor. Substrate-binding positions include D28, H97, and 119 to 121 (YSN).

It belongs to the RbsD / FucU family. RbsD subfamily. In terms of assembly, homodecamer.

It is found in the cytoplasm. It carries out the reaction beta-D-ribopyranose = beta-D-ribofuranose. The protein operates within carbohydrate metabolism; D-ribose degradation; D-ribose 5-phosphate from beta-D-ribopyranose: step 1/2. Catalyzes the interconversion of beta-pyran and beta-furan forms of D-ribose. The sequence is that of D-ribose pyranase from Lacticaseibacillus casei (strain BL23) (Lactobacillus casei).